A 224-amino-acid chain; its full sequence is Large ribosomal subunit protein uL4 (224 aa).

The disordered stretch occupies residues 52–109; that stretch reads AAARQGTHSTKTRGDVSGGGRKPYRQKGTGRARQGSTRAPQFTGGGVVHGPKPRDYSQ.

It belongs to the universal ribosomal protein uL4 family. As to quaternary structure, part of the 50S ribosomal subunit.

Functionally, one of the primary rRNA binding proteins, this protein initially binds near the 5'-end of the 23S rRNA. It is important during the early stages of 50S assembly. It makes multiple contacts with different domains of the 23S rRNA in the assembled 50S subunit and ribosome. Forms part of the polypeptide exit tunnel. The sequence is that of Large ribosomal subunit protein uL4 from Mycobacterium marinum (strain ATCC BAA-535 / M).